The chain runs to 376 residues: Homoserine dehydrogenase (376 aa).

N17 and I18 together coordinate NADP(+). Residue I18 participates in NAD(+) binding. Positions 18, 67, 99, and 123 each coordinate NADPH. NADP(+)-binding residues include T99 and K123. T99 is a binding site for NAD(+). Residues E150, V153, A155, and L157 each coordinate Na(+). S201 is subject to Phosphoserine. NADP(+) contacts are provided by G213 and E216. Positions 216 and 227 each coordinate L-homoserine. Residue K231 is the Proton donor of the active site. G349 is an NADP(+) binding site. Residue G349 coordinates NAD(+). Residue G349 participates in NADPH binding.

It belongs to the homoserine dehydrogenase family. A metal cation serves as cofactor.

The catalysed reaction is L-homoserine + NADP(+) = L-aspartate 4-semialdehyde + NADPH + H(+). It carries out the reaction L-homoserine + NAD(+) = L-aspartate 4-semialdehyde + NADH + H(+). It functions in the pathway amino-acid biosynthesis; L-methionine biosynthesis via de novo pathway; L-homoserine from L-aspartate: step 3/3. Its pathway is amino-acid biosynthesis; L-threonine biosynthesis; L-threonine from L-aspartate: step 3/5. In terms of biological role, catalyzes the conversion of L-aspartate-beta-semialdehyde (L-Asa) to L-homoserine (L-Hse), the third step in the biosynthesis of amino acids that derive from aspartate (the aspartate family of amino acids), including methioinine and threonine, the latter of which is a precursor to isoleucine; production of homoserine leads to a branch-point in the pathway as it can either be O-phosphorylated for processing to threonine, or O-acylated for processing to methionine. In Schizosaccharomyces pombe (strain 972 / ATCC 24843) (Fission yeast), this protein is Homoserine dehydrogenase.